Reading from the N-terminus, the 105-residue chain is Urease subunit beta (105 aa).

The protein belongs to the urease beta subunit family. As to quaternary structure, heterotrimer of UreA (gamma), UreB (beta) and UreC (alpha) subunits. Three heterotrimers associate to form the active enzyme.

The protein localises to the cytoplasm. It catalyses the reaction urea + 2 H2O + H(+) = hydrogencarbonate + 2 NH4(+). Its pathway is nitrogen metabolism; urea degradation; CO(2) and NH(3) from urea (urease route): step 1/1. The chain is Urease subunit beta from Pseudomonas putida (strain GB-1).